Reading from the N-terminus, the 344-residue chain is uncharacterized protein (344 aa).

Positions 221–249 (IQAQSMDEQKQIQEIYQNVEKLKEDVTKN) form a coiled coil.

This sequence belongs to the IIV-6 287R family.

This is an uncharacterized protein from Aedes vexans (Inland floodwater mosquito).